The sequence spans 332 residues: MNKIDFVVTWVDGNDPVWKEKKSRYDGSVSTSKQSMNSVKAYREWGTFKYWFRGVERFAPWVNKVYLVTDQQRPSWLDINSEKLVLVDHTEIICNDCLPVFSANPIESNIHRIPGLSEHFVFFNDDMYLTAPVEPTDFFSEDGLPKYNTALSPIIPERYGTGNFQINDMEIVTSYFSRNEILKNGQFFDPKQGLKSIVKSLLYRNSQFICGFWESHLPYPLLKSTMDLIWEKEKAVLGRTSASRFRNPSDTNVWLFKYWQIASGQYAVGNPKLGRLFSLDNAGPDFWNLLNSGKYKIMCINDVYDIKDEEKVMQEFIAAMKNLLPDKSTFEL.

The protein belongs to the stealth family.

This Streptococcus pneumoniae protein is Capsular polysaccharide phosphotransferase WcwK (wcwK).